We begin with the raw amino-acid sequence, 86 residues long: Anti-adapter protein IraP (86 aa).

The stretch at 1-36 (MKNLIAELLLKLAQKEEESKELVAQVEALEIIVTAM) forms a coiled coil.

The protein belongs to the IraP family. Interacts with RssB.

Its subcellular location is the cytoplasm. Its function is as follows. Inhibits RpoS proteolysis by regulating RssB activity, thereby increasing the stability of the sigma stress factor RpoS especially during phosphate and magnesium starvation, but also in stationary phase and during nitrogen starvation. Its effect on RpoS stability is due to its interaction with RssB, which probably blocks the interaction of RssB with RpoS, and the consequent delivery of the RssB-RpoS complex to the ClpXP protein degradation pathway. The sequence is that of Anti-adapter protein IraP from Salmonella choleraesuis (strain SC-B67).